The sequence spans 377 residues: Succinyl-diaminopimelate desuccinylase (377 aa).

His66 lines the Zn(2+) pocket. Asp68 is an active-site residue. Asp99 lines the Zn(2+) pocket. Residue Glu133 is the Proton acceptor of the active site. Zn(2+) contacts are provided by Glu134, Glu162, and His348.

The protein belongs to the peptidase M20A family. DapE subfamily. Homodimer. Zn(2+) serves as cofactor. Co(2+) is required as a cofactor.

It carries out the reaction N-succinyl-(2S,6S)-2,6-diaminopimelate + H2O = (2S,6S)-2,6-diaminopimelate + succinate. It participates in amino-acid biosynthesis; L-lysine biosynthesis via DAP pathway; LL-2,6-diaminopimelate from (S)-tetrahydrodipicolinate (succinylase route): step 3/3. Its function is as follows. Catalyzes the hydrolysis of N-succinyl-L,L-diaminopimelic acid (SDAP), forming succinate and LL-2,6-diaminopimelate (DAP), an intermediate involved in the bacterial biosynthesis of lysine and meso-diaminopimelic acid, an essential component of bacterial cell walls. The protein is Succinyl-diaminopimelate desuccinylase of Histophilus somni (strain 2336) (Haemophilus somnus).